We begin with the raw amino-acid sequence, 171 residues long: N5-carboxyaminoimidazole ribonucleotide mutase (171 aa).

Substrate is bound by residues Ser-13, Asp-16, and Arg-43.

This sequence belongs to the AIR carboxylase family. Class I subfamily.

It carries out the reaction 5-carboxyamino-1-(5-phospho-D-ribosyl)imidazole + H(+) = 5-amino-1-(5-phospho-D-ribosyl)imidazole-4-carboxylate. It participates in purine metabolism; IMP biosynthesis via de novo pathway; 5-amino-1-(5-phospho-D-ribosyl)imidazole-4-carboxylate from 5-amino-1-(5-phospho-D-ribosyl)imidazole (N5-CAIR route): step 2/2. Catalyzes the conversion of N5-carboxyaminoimidazole ribonucleotide (N5-CAIR) to 4-carboxy-5-aminoimidazole ribonucleotide (CAIR). The chain is N5-carboxyaminoimidazole ribonucleotide mutase from Mycobacterium leprae (strain TN).